A 410-amino-acid chain; its full sequence is uncharacterized protein (410 aa).

Residues 1–41 (MVKSFRMKALIAGAAVAAAVSAGAVSDVPAAKVLQPTAAYA) form the signal peptide.

As to quaternary structure, interacts with PcrA, Pdp, YclM, YkvL, YhcQ and YomL. The interaction with PcrA is not essential for cell viability or repair of UV-induced lesions.

The protein resides in the secreted. Functionally, increases the processivity of the PcrA helicase, but does not bind to DNA. This is an uncharacterized protein from Bacillus subtilis (strain 168).